We begin with the raw amino-acid sequence, 50 residues long: Sperm protamine P1 (50 aa).

2 disulfide bridges follow: C7-C15 and C39-C47.

It belongs to the protamine P1 family. Cross-linked by interchain disulfide bonds around the DNA-helix. In terms of tissue distribution, testis.

It localises to the nucleus. The protein resides in the chromosome. Its function is as follows. Protamines substitute for histones in the chromatin of sperm during the haploid phase of spermatogenesis. They compact sperm DNA into a highly condensed, stable and inactive complex. The protein is Sperm protamine P1 (PRM1) of Oryctolagus cuniculus (Rabbit).